The primary structure comprises 76 residues: Conotoxin VnMSGL-0112 (76 aa).

Positions 1 to 20 (MSGLGIMVLTLLLLVSMATS) are cleaved as a signal peptide. The propeptide occupies 21 to 45 (HQDGRGKQATQRDAINVRRRRSITR). 3 cysteine pairs are disulfide-bonded: Cys49–Cys61, Cys53–Cys70, and Cys60–Cys74.

Belongs to the conotoxin O3 superfamily. Expressed by the venom duct.

Its subcellular location is the secreted. This Conus ventricosus (Mediterranean cone) protein is Conotoxin VnMSGL-0112.